We begin with the raw amino-acid sequence, 72 residues long: MAKEDSIEMQGTILETLPNTMFRVELENGHVLTAHISGKMRKNYIRILTGDKVTVEMTPYDLTKGRIIFRAR.

The S1-like domain occupies 1–72 (MAKEDSIEMQ…TKGRIIFRAR (72 aa)).

This sequence belongs to the IF-1 family. In terms of assembly, component of the 30S ribosomal translation pre-initiation complex which assembles on the 30S ribosome in the order IF-2 and IF-3, IF-1 and N-formylmethionyl-tRNA(fMet); mRNA recruitment can occur at any time during PIC assembly.

It is found in the cytoplasm. Functionally, one of the essential components for the initiation of protein synthesis. Stabilizes the binding of IF-2 and IF-3 on the 30S subunit to which N-formylmethionyl-tRNA(fMet) subsequently binds. Helps modulate mRNA selection, yielding the 30S pre-initiation complex (PIC). Upon addition of the 50S ribosomal subunit IF-1, IF-2 and IF-3 are released leaving the mature 70S translation initiation complex. This chain is Translation initiation factor IF-1, found in Actinobacillus succinogenes (strain ATCC 55618 / DSM 22257 / CCUG 43843 / 130Z).